We begin with the raw amino-acid sequence, 262 residues long: Ribosomal RNA small subunit methyltransferase A (262 aa).

Positions 18, 43, 65, 91, and 110 each coordinate S-adenosyl-L-methionine.

This sequence belongs to the class I-like SAM-binding methyltransferase superfamily. rRNA adenine N(6)-methyltransferase family. RsmA subfamily.

The protein resides in the cytoplasm. It carries out the reaction adenosine(1518)/adenosine(1519) in 16S rRNA + 4 S-adenosyl-L-methionine = N(6)-dimethyladenosine(1518)/N(6)-dimethyladenosine(1519) in 16S rRNA + 4 S-adenosyl-L-homocysteine + 4 H(+). In terms of biological role, specifically dimethylates two adjacent adenosines (A1518 and A1519) in the loop of a conserved hairpin near the 3'-end of 16S rRNA in the 30S particle. May play a critical role in biogenesis of 30S subunits. The polypeptide is Ribosomal RNA small subunit methyltransferase A (Ehrlichia ruminantium (strain Gardel)).